The sequence spans 281 residues: NADPH-dependent 7-cyano-7-deazaguanine reductase (281 aa).

87-89 (IES) serves as a coordination point for substrate. Residue 89 to 90 (SK) coordinates NADPH. The active-site Thioimide intermediate is the C188. D195 acts as the Proton donor in catalysis. Substrate is bound at residue 227–228 (HE). Position 256–257 (256–257 (RG)) interacts with NADPH. The segment at 261–281 (INPYRSTEQAKPDHNHRMARQ) is disordered. Over residues 268–281 (EQAKPDHNHRMARQ) the composition is skewed to basic and acidic residues.

This sequence belongs to the GTP cyclohydrolase I family. QueF type 2 subfamily. Homodimer.

The protein localises to the cytoplasm. The catalysed reaction is 7-aminomethyl-7-carbaguanine + 2 NADP(+) = 7-cyano-7-deazaguanine + 2 NADPH + 3 H(+). It participates in tRNA modification; tRNA-queuosine biosynthesis. In terms of biological role, catalyzes the NADPH-dependent reduction of 7-cyano-7-deazaguanine (preQ0) to 7-aminomethyl-7-deazaguanine (preQ1). This is NADPH-dependent 7-cyano-7-deazaguanine reductase from Vibrio vulnificus (strain CMCP6).